The sequence spans 259 residues: Hydroxyethylthiazole kinase (259 aa).

Residue Met-37 participates in substrate binding. Arg-113 and Thr-158 together coordinate ATP. Residue Gly-185 coordinates substrate.

This sequence belongs to the Thz kinase family. It depends on Mg(2+) as a cofactor.

It carries out the reaction 5-(2-hydroxyethyl)-4-methylthiazole + ATP = 4-methyl-5-(2-phosphooxyethyl)-thiazole + ADP + H(+). Its pathway is cofactor biosynthesis; thiamine diphosphate biosynthesis; 4-methyl-5-(2-phosphoethyl)-thiazole from 5-(2-hydroxyethyl)-4-methylthiazole: step 1/1. Catalyzes the phosphorylation of the hydroxyl group of 4-methyl-5-beta-hydroxyethylthiazole (THZ). The chain is Hydroxyethylthiazole kinase from Helicobacter pylori (strain ATCC 700392 / 26695) (Campylobacter pylori).